Here is a 1007-residue protein sequence, read N- to C-terminus: MPCCLWAALSLLLAVVGAGAWTPPRQPLLLTPRHRRHAQETHHLRLLGWDLKLKENKAIRSPYYKECQFFTGRVLHEEGSAVTVTECDGQLYGLLQVGGEEFVLQPTRTQEKHVLRRRDVTHSERSAEYNLTGDTVIDLDLDFDEDDDLLPTSHVHPRHSDHSDKEYFHDMHLFRRPASGVKGLWLELAIVADNTMLKFHGRERVKHYILALMNIVSAIFNDPSLGSNITLVINKLFLYEDKDIILKYGNIKKSLEAINKWNYRHLMKLPEGSTGWDATIWLTRSQLGGPSGFAPVGGVCTKTRSAAIDRDEGLTSAFVIAHELAHLLGLTHDGEGNCQSEALRGSVMAPTVLATLHNFAWSSCSKEQFHAKSKKWWCLHERSTDEGVELGGAKELSNYVFTMDEQCRTEFGEGFSVCRSVKVRSACSRLWCAHRAMPHVCRSKRAPPLEGTPCGQNQWCVDRVCEPMPGHSKETKVENKHTPEWGDWEEWSACNADCGYGLRTRTRKCKYRGFVSESACEGAGSQVATCWAGSSCAATRDIRSDLCHRQQSRLIPYLHANESNHCEISCVDYAGGSPTNFGALPDGTPCSYLRPFDVCFQGTCVKGQCNSSDTTCNWCPDGYCNNNTNTYTRLLGNGWTRMTMVPHEARQLSIHIATPIPLHIALRERKRDKPILELSKHSKKFDISSLQDNYLKYDPSVPQNLQIVEMDSNILDLKESFRYEGEAITAGTLLRWNQTDTDIYITSESRLQTDLMIMAIPVNPTLEDAVSVDASVNYSTPTGRTRPLEYRWSIERGPCSASCGGGVRLITAQCHRDQKCPPPRYESCNTHSCEFVWASDDWEECSSTCGSNGVQERQLFCVPSNASMLSRREFIKHSVSPVMCSSSKPPHRQPCNRIPCPVYWREQPWTPCSASCGRGVSRRPLTCPASDELLCGPKPRERRRRCRLRRCPSALRVAVQCPERDHAHYCELFTLEQLHRNCEVPPFRKYCCNACRDADRRQHRRYG.

Positions 1–20 are cleaved as a signal peptide; it reads MPCCLWAALSLLLAVVGAGA. N-linked (GlcNAc...) asparagine glycans are attached at residues Asn-130 and Asn-228. The Peptidase M12B domain occupies 184 to 370; it reads LWLELAIVAD…WSSCSKEQFH (187 aa). Residue His-322 participates in Zn(2+) binding. The Metal-binding motif lies at 322–333; that stretch reads HELAHLLGLTHD. The active site involves Glu-323. Positions 326 and 332 each coordinate Zn(2+). Disulfide bonds link Cys-338–Cys-364, Cys-494–Cys-530, Cys-498–Cys-536, and Cys-509–Cys-520. A TSP type-1 1 domain is found at 482-537; the sequence is TPEWGDWEEWSACNADCGYGLRTRTRKCKYRGFVSESACEGAGSQVATCWAGSSCA. 6 N-linked (GlcNAc...) asparagine glycosylation sites follow: Asn-561, Asn-610, Asn-626, Asn-737, Asn-777, and Asn-865. TSP type-1 domains lie at 833-899 and 900-952; these read CEFV…NRIP and CPVY…RRCP. Disulfide bonds link Cys-912–Cys-946, Cys-916–Cys-951, and Cys-927–Cys-935.

The cofactor is Zn(2+).

Its subcellular location is the secreted. The protein localises to the extracellular space. The protein resides in the extracellular matrix. Its function is as follows. Involved in larval molting and metamorphosis. May degrade extracellular matrix (ECM) and basement membrane (BM) during the development of organs to allow degeneration and remodeling of tissues. This chain is A disintegrin and metalloproteinase with thrombospondin motifs 1, found in Bombyx mori (Silk moth).